Here is a 216-residue protein sequence, read N- to C-terminus: Imidazole glycerol phosphate synthase subunit HisH (216 aa).

The 215-residue stretch at 2 to 216 folds into the Glutamine amidotransferase type-1 domain; sequence RVAIIDYGSG…LIANFLKWKP (215 aa). Cysteine 88 (nucleophile) is an active-site residue. Residues histidine 196 and glutamate 198 contribute to the active site.

As to quaternary structure, heterodimer of HisH and HisF.

The protein resides in the cytoplasm. It carries out the reaction 5-[(5-phospho-1-deoxy-D-ribulos-1-ylimino)methylamino]-1-(5-phospho-beta-D-ribosyl)imidazole-4-carboxamide + L-glutamine = D-erythro-1-(imidazol-4-yl)glycerol 3-phosphate + 5-amino-1-(5-phospho-beta-D-ribosyl)imidazole-4-carboxamide + L-glutamate + H(+). It catalyses the reaction L-glutamine + H2O = L-glutamate + NH4(+). It participates in amino-acid biosynthesis; L-histidine biosynthesis; L-histidine from 5-phospho-alpha-D-ribose 1-diphosphate: step 5/9. In terms of biological role, IGPS catalyzes the conversion of PRFAR and glutamine to IGP, AICAR and glutamate. The HisH subunit catalyzes the hydrolysis of glutamine to glutamate and ammonia as part of the synthesis of IGP and AICAR. The resulting ammonia molecule is channeled to the active site of HisF. The polypeptide is Imidazole glycerol phosphate synthase subunit HisH (Brucella suis biovar 1 (strain 1330)).